Consider the following 879-residue polypeptide: Aminopeptidase M1 (879 aa).

Residues His-98–Val-205 are required for membrane association. Substrate-binding positions include Glu-138 and Gly-271–Asn-275. His-307 contacts Zn(2+). Glu-308 (proton acceptor) is an active-site residue. Positions 311 and 330 each coordinate Zn(2+). The short motif at Leu-728–Leu-729 is the Dileucine internalization motif element.

It belongs to the peptidase M1 family. As to quaternary structure, homodimer. Interacts with N-1-naphthylphthalamic acid (NPA). Zn(2+) is required as a cofactor. In terms of tissue distribution, ubiquitous with preferential expression in 5 days-old seedlings, roots, young flowers, upper inflorescence stems, and rosette leaves.

The protein localises to the membrane. It localises to the microsome membrane. It is found in the cytoplasm. It carries out the reaction Release of an N-terminal amino acid, Xaa-|-Yaa- from a peptide, amide or arylamide. Xaa is preferably Ala, but may be most amino acids including Pro (slow action). When a terminal hydrophobic residue is followed by a prolyl residue, the two may be released as an intact Xaa-Pro dipeptide.. Metallopeptidase that binds to the auxin transport inhibitor N-1-naphthylphthalamic acid (NPA). Required for embryonic and seedling development as well as cell cycle progression. Homodimerization is required to proper localization and activity. May play a negative role in the regulation of PIN auxin transport proteins. The sequence is that of Aminopeptidase M1 (APM1) from Arabidopsis thaliana (Mouse-ear cress).